A 246-amino-acid polypeptide reads, in one-letter code: Transcription factor A, mitochondrial (246 aa).

Residues 1–42 (MALLRGVWGVLNALGKSGADLCAGCGSRLRYPFSFAYVPKWF) constitute a mitochondrion transit peptide. Positions 50–118 (PKKPMTSYVR…VYKEEINRIQ (69 aa)) form a DNA-binding region, HMG box 1. Phosphoserine; by PKA is present on residues serine 56 and serine 61. Phosphothreonine is present on threonine 122. Positions 155–219 (PKRPRSAYNI…RYYNEMKSWE (65 aa)) form a DNA-binding region, HMG box 2. Phosphoserine; by PKA is present on serine 160. Residues serine 193 and serine 195 each carry the phosphoserine modification.

In terms of assembly, monomer; binds DNA as a monomer. Homodimer. Component of the mitochondrial transcription initiation complex, composed at least of TFB2M, TFAM and POLRMT. In this complex TFAM recruits POLRMT to the promoter whereas TFB2M induces structural changes in POLRMT to enable promoter opening and trapping of the DNA non-template strand. Upon metabolic stress, forms a complex composed of FOXO3, SIRT3, TFAM and POLRMT. Interacts with TFB1M and TFB2M. Interacts with CLPX; this enhances DNA-binding. Post-translationally, phosphorylation by PKA within the HMG box 1 impairs DNA binding and promotes degradation by the AAA+ Lon protease.

The protein resides in the mitochondrion. It localises to the mitochondrion matrix. It is found in the mitochondrion nucleoid. Binds to the mitochondrial light strand promoter and functions in mitochondrial transcription regulation. Component of the mitochondrial transcription initiation complex, composed at least of TFB2M, TFAM and POLRMT that is required for basal transcription of mitochondrial DNA. In this complex, TFAM recruits POLRMT to a specific promoter whereas TFB2M induces structural changes in POLRMT to enable promoter opening and trapping of the DNA non-template strand. Required for accurate and efficient promoter recognition by the mitochondrial RNA polymerase. Promotes transcription initiation from the HSP1 and the light strand promoter by binding immediately upstream of transcriptional start sites. Is able to unwind DNA. Bends the mitochondrial light strand promoter DNA into a U-turn shape via its HMG boxes. Required for maintenance of normal levels of mitochondrial DNA. May play a role in organizing and compacting mitochondrial DNA. This Bos taurus (Bovine) protein is Transcription factor A, mitochondrial.